A 2104-amino-acid polypeptide reads, in one-letter code: Transmembrane matrix receptor MUP-4 (2104 aa).

An N-terminal signal peptide occupies residues 1–15 (MRWVPLVLLPLIASA). Topologically, residues 16-1860 (ATTYQHRQTY…FCETAPSNLP (1845 aa)) are extracellular. 3 EGF-like domains span residues 71 to 110 (VVNE…TSPD), 122 to 163 (TTNE…VSTS), and 175 to 213 (SVNE…ASPN). Disulfide bonds link C75/C89, C83/C98, C126/C142, C136/C151, C179/C192, and C186/C201. Positions 220–265 (RVCNKPKAPEYYGQQSRQPQCSEGSGCGPNEECRFNTAGEKVCQCR) constitute a WR1 domain. 3 EGF-like domains span residues 278 to 315 (VFSQ…VSPD), 327 to 360 (VRNE…SNCI), and 377 to 416 (AANQ…VSSN). Disulfide bonds link C282/C294, C288/C303, C331/C344, C338/C353, C355/C359, C381/C395, and C389/C404. Positions 437 to 612 (DLVFLIDGSG…DLNTRLRSAI (176 aa)) constitute a VWFA domain. 2 N-linked (GlcNAc...) asparagine glycosylation sites follow: N494 and N556. EGF-like domains are found at residues 728–772 (SNDE…NKCE) and 819–857 (LIDE…KSPE). Disulfide bonds link C732/C746, C740/C756, C758/C771, C823/C836, C830/C845, C873/C886, C880/C895, C923/C937, C931/C946, C972/C985, C979/C995, C1020/C1034, C1028/C1046, C1075/C1089, C1083/C1098, C1125/C1139, C1133/C1148, C1173/C1187, C1181/C1196, C1219/C1233, and C1227/C1242. The EGF-like 9; calcium-binding domain occupies 869 to 907 (QRNECLDGTHNCSMNADCIDLPDGFLCRCKEDFVDISPN). A glycan (N-linked (GlcNAc...) asparagine) is linked at N879. EGF-like domains are found at residues 919–958 (LVNE…HDEL), 968–1007 (LNQI…KSPL), 1016–1058 (VEPI…VGAV), 1071–1110 (LVNE…ESPV), 1121–1160 (LVNE…QKPE), 1169–1208 (IINE…EMPS), and 1215–1254 (RFDE…EISD). Residue N1037 is glycosylated (N-linked (GlcNAc...) asparagine). N1132 carries N-linked (GlcNAc...) asparagine glycosylation. N1271, N1403, and N1576 each carry an N-linked (GlcNAc...) asparagine glycan. SEA domains lie at 1322-1444 (PTTS…DDAD) and 1495-1620 (AVES…PEQL). 3 consecutive EGF-like domains span residues 1622-1658 (PFSN…LNPS), 1669-1705 (GVNE…YVNS), and 1717-1754 (SIDY…LRKS). Disulfide bonds link C1626/C1637, C1631/C1646, C1673/C1687, C1681/C1696, C1721/C1733, C1727/C1742, C1776/C1789, C1783/C1798, C1821/C1830, C1824/C1841, and C1843/C1852. 2 N-linked (GlcNAc...) asparagine glycosylation sites follow: N1730 and N1782. An EGF-like 20; calcium-binding domain is found at 1772–1810 (DIDECALGLHNCSAAAICIDKKIGYECQCQEGYEDGNPS). One can recognise an EGF-like 21 domain in the interval 1817–1853 (AASLCGLCNGHGDCIHDALSSNVTCACLDGYTGQFCE). N1838 carries an N-linked (GlcNAc...) asparagine glycan. The chain crosses the membrane as a helical span at residues 1861 to 1881 (LILMTLLALLFLLLTLLCCLY). Topologically, residues 1882–2104 (MCARCRCFGA…TTKAEEVNYF (223 aa)) are cytoplasmic. Over residues 2031 to 2040 (SGAMMSSASG) the composition is skewed to low complexity. The disordered stretch occupies residues 2031-2104 (SGAMMSSASG…TTKAEEVNYF (74 aa)). Composition is skewed to basic and acidic residues over residues 2062-2076 (VYDR…HDFE) and 2083-2104 (TGTE…VNYF).

As to expression, abundant at hypodermal cell-matrix junctions overlying muscle of threefold embryos. Expression continues in body wall muscle in larvae and adults and is also detected in other regions where cells show mechanical attachment to the hypodermis including the inner surface of the pharynx, overlying anal and intestinal muscles, overlying vulval and uterine sex muscles, male tail muscle attachment zones and the six mechanosensory neurons (at protein level).

It localises to the cell junction. The protein localises to the hemidesmosome. It is found in the cytoplasm. Its subcellular location is the cytoskeleton. The protein resides in the cell membrane. Functionally, required for junctional attachments between hypodermis and muscle, and between the apical epithelial surface and the cuticular matrix. Essential for enclosure of the embryo by the hypodermis, hypodermal integrity, embryo elongation, and maintenance of hypodermal morphology in fully elongated embryos. The chain is Transmembrane matrix receptor MUP-4 from Caenorhabditis elegans.